The following is a 497-amino-acid chain: Serine/threonine-protein phosphatase 2A 56 kDa regulatory subunit beta isoform (497 aa).

The span at 1–19 (METKLPPASTPTSPSSPGL) shows a compositional bias: low complexity. 2 disordered regions span residues 1–55 (METK…YQSN) and 473–497 (QGTQ…GGQS). A phosphoserine mark is found at serine 32, serine 35, serine 44, serine 46, serine 47, and serine 48. Over residues 34–45 (RSLRRARPRRSH) the composition is skewed to basic residues.

It belongs to the phosphatase 2A regulatory subunit B56 family. Component of the serine/threonine-protein phosphatase 2A complex (PP2A). This complex consists of a common heterodimeric core enzyme, composed of a 36 kDa catalytic subunit (subunit C) and a 65 kDa constant scaffold subunit (PR65 or subunit A), that associates with a variety of regulatory subunits. Proteins that associate with the core dimer include three families of regulatory subunits B (the R2/B/PR55/B55, R3/B''/PR72/PR130/PR59 and R5/B'/B56 families), the 48 kDa variable regulatory subunit, viral proteins, and cell signaling molecules. Interacts with SGO1. Interacts with AKT1. Post-translationally, ubiquitinated by CUL3-KLHL15 complex; this modification leads to proteasomal degradation. Widely expressed at the mRNA level, with highest levels in cerebellum and lung.

Its subcellular location is the cytoplasm. In terms of biological role, as the regulatory component of the serine/threonine-protein phosphatase 2A (PP2A) holoenzyme, modulates substrate specificity, subcellular localization, and responsiveness to phosphorylation. The phosphorylated form mediates the interaction between PP2A and AKT1, leading to AKT1 dephosphorylation. The protein is Serine/threonine-protein phosphatase 2A 56 kDa regulatory subunit beta isoform (Ppp2r5b) of Rattus norvegicus (Rat).